We begin with the raw amino-acid sequence, 248 residues long: TPR repeat-containing protein slr0751 (248 aa).

TPR repeat units follow at residues 61-94, 95-128, 129-162, and 163-196; these read PEAI…SPDS, PETH…DRYY, IPPY…DPNR, and YKAY…RPDY.

The chain is TPR repeat-containing protein slr0751 from Synechocystis sp. (strain ATCC 27184 / PCC 6803 / Kazusa).